We begin with the raw amino-acid sequence, 426 residues long: D-amino acid dehydrogenase (426 aa).

3-17 (VVVLGAGVIGVTTAW) contributes to the FAD binding site.

It belongs to the DadA oxidoreductase family. It depends on FAD as a cofactor.

The catalysed reaction is a D-alpha-amino acid + A + H2O = a 2-oxocarboxylate + AH2 + NH4(+). It functions in the pathway amino-acid degradation; D-alanine degradation; NH(3) and pyruvate from D-alanine: step 1/1. Oxidative deamination of D-amino acids. The protein is D-amino acid dehydrogenase of Phenylobacterium zucineum (strain HLK1).